The following is a 600-amino-acid chain: Adenine deaminase 3 (600 aa).

It belongs to the metallo-dependent hydrolases superfamily. Adenine deaminase family. The cofactor is Mn(2+).

It catalyses the reaction adenine + H2O + H(+) = hypoxanthine + NH4(+). The protein is Adenine deaminase 3 of Rhizobium johnstonii (strain DSM 114642 / LMG 32736 / 3841) (Rhizobium leguminosarum bv. viciae).